A 184-amino-acid polypeptide reads, in one-letter code: Photosystem I assembly protein Ycf4 (184 aa).

2 consecutive transmembrane segments (helical) span residues 22–42 (LCWAFILVLGAIGFSLVGFSS) and 64–84 (IVMCFYGIAGIFLGFYLWCTI).

This sequence belongs to the Ycf4 family.

The protein resides in the plastid. Its subcellular location is the chloroplast thylakoid membrane. Functionally, seems to be required for the assembly of the photosystem I complex. The polypeptide is Photosystem I assembly protein Ycf4 (Angiopteris evecta (Mule's foot fern)).